We begin with the raw amino-acid sequence, 322 residues long: Malate dehydrogenase (322 aa).

NAD(+)-binding positions include 10–15 (GSGQIG) and D34. Positions 83 and 89 each coordinate substrate. NAD(+)-binding positions include N96 and 119–121 (ITN). The substrate site is built by N121 and R152. H176 acts as the Proton acceptor in catalysis.

The protein belongs to the LDH/MDH superfamily. MDH type 3 family.

It carries out the reaction (S)-malate + NAD(+) = oxaloacetate + NADH + H(+). Functionally, catalyzes the reversible oxidation of malate to oxaloacetate. In Bradyrhizobium sp. (strain ORS 278), this protein is Malate dehydrogenase.